We begin with the raw amino-acid sequence, 153 residues long: Actin-related protein 2/3 complex subunit 5-like protein (153 aa).

Phosphoserine is present on serine 64.

This sequence belongs to the ARPC5 family. As to quaternary structure, may be a component of the Arp2/3 complex in which it may replace ARPC5.

The protein resides in the cytoplasm. It localises to the cytoskeleton. May function as component of the Arp2/3 complex which is involved in regulation of actin polymerization and together with an activating nucleation-promoting factor (NPF) mediates the formation of branched actin networks. The polypeptide is Actin-related protein 2/3 complex subunit 5-like protein (Arpc5l) (Mus musculus (Mouse)).